The sequence spans 442 residues: Tol-Pal system protein TolB (442 aa).

The N-terminal stretch at 1–26 (MRHRSCFSLFAGLALVFCLAVGTAAA) is a signal peptide.

Belongs to the TolB family. As to quaternary structure, the Tol-Pal system is composed of five core proteins: the inner membrane proteins TolA, TolQ and TolR, the periplasmic protein TolB and the outer membrane protein Pal. They form a network linking the inner and outer membranes and the peptidoglycan layer.

It is found in the periplasm. Part of the Tol-Pal system, which plays a role in outer membrane invagination during cell division and is important for maintaining outer membrane integrity. The polypeptide is Tol-Pal system protein TolB (Nitratidesulfovibrio vulgaris (strain ATCC 29579 / DSM 644 / CCUG 34227 / NCIMB 8303 / VKM B-1760 / Hildenborough) (Desulfovibrio vulgaris)).